Consider the following 488-residue polypeptide: UDP-N-acetylmuramate--L-alanine ligase (488 aa).

127–133 is an ATP binding site; it reads GTHGKTT.

Belongs to the MurCDEF family.

It localises to the cytoplasm. The enzyme catalyses UDP-N-acetyl-alpha-D-muramate + L-alanine + ATP = UDP-N-acetyl-alpha-D-muramoyl-L-alanine + ADP + phosphate + H(+). The protein operates within cell wall biogenesis; peptidoglycan biosynthesis. Functionally, cell wall formation. The chain is UDP-N-acetylmuramate--L-alanine ligase from Shewanella putrefaciens (strain CN-32 / ATCC BAA-453).